The following is a 506-amino-acid chain: Phenylacetaldehyde synthase (506 aa).

L-phenylalanine contacts are provided by Pro101, His202, and His317. Lys318 carries the post-translational modification N6-(pyridoxal phosphate)lysine.

Belongs to the group II decarboxylase family. In terms of assembly, homotetramer. The cofactor is pyridoxal 5'-phosphate. In terms of tissue distribution, highly expressed in corolla limbs and at lower levels in corolla tubes and ovaries.

It carries out the reaction L-phenylalanine + O2 + H2O + H(+) = 2-phenylacetaldehyde + H2O2 + NH4(+) + CO2. Bifunctional enzyme that catalyzes the decarboxylation of L-phenylalanine to 2-phenylethylamine, which is then oxidized to form 2-phenylacetaldehyde, a constituent of floral scent. 2-phenylacetaldehyde is a precursor of 2-phenylethanol, another constituent of floral scent. This Petunia hybrida (Petunia) protein is Phenylacetaldehyde synthase.